Reading from the N-terminus, the 352-residue chain is Divinyl chlorophyll a/b light-harvesting protein PcbB (352 aa).

6 helical membrane-spanning segments follow: residues 27-47 (FIAAHAAHAGLMMFWAGAFTL), 89-109 (CTVIAVLHLIFSGVLGAGGIL), 142-162 (FILGHHLIFLGLANIQFVEWA), 203-223 (VMGGHAFLAFFQIIGGAFHII), 243-263 (AVLSYSLAGVGYCALVAAFWS), and 307-327 (LANVHFYLGFFFIQGHLWHAL).

This sequence belongs to the PsbB/PsbC family. IsiA/Pcb subfamily. As to quaternary structure, the antenna complex consists of divinyl chlorophylls (a and b) and divinyl chlorophyll a/b binding proteins and binds more divinyl chlorophyll b than does the antenna complex from high-light-adapted Prochlorococcus. Divinyl chlorophyll a serves as cofactor. The cofactor is divinyl chlorophyll b.

It is found in the cellular thylakoid membrane. Its function is as follows. The antenna complex functions as a light receptor, it captures and delivers excitation energy to photosystems II and I. The Prochlorales pcb genes are not related to higher plant LHCs. The protein is Divinyl chlorophyll a/b light-harvesting protein PcbB (pcbB) of Prochlorococcus marinus (strain NATL2A).